The sequence spans 185 residues: Pyruvate/ketoisovalerate oxidoreductases common subunit gamma (185 aa).

As to quaternary structure, heterotetramer of one alpha, one beta, one delta and one gamma chain.

It carries out the reaction 2 oxidized [2Fe-2S]-[ferredoxin] + pyruvate + CoA = 2 reduced [2Fe-2S]-[ferredoxin] + acetyl-CoA + CO2 + H(+). The enzyme catalyses 3-methyl-2-oxobutanoate + 2 oxidized [2Fe-2S]-[ferredoxin] + CoA = 2-methylpropanoyl-CoA + 2 reduced [2Fe-2S]-[ferredoxin] + CO2 + H(+). The sequence is that of Pyruvate/ketoisovalerate oxidoreductases common subunit gamma (porG) from Pyrococcus furiosus (strain ATCC 43587 / DSM 3638 / JCM 8422 / Vc1).